A 677-amino-acid polypeptide reads, in one-letter code: MAEKKKVKEGKGRKGKGKKDRKGKKAEGSDQGAAASPKLKEIKTQSVQEGKKLVLKCQAVSEQPSLKFRWFKGEKEIGAKNKPDSKPEHIKIRGKKKSSELQISKASSADNGEYKCMVSNQLGNDTVTVNVTIVPKPTYNHLLLMKIYLKVTSVEKSVEPSTLNLLESQKEVIFATTKRGDTTAGPGHLIKCSDKEKTYCVNGGECYVLNGITSSNQFMCKCKPGFTGARCTETDPLRVVRSEKHLGIEFMEAEELYQKRVLTITGICIDLLVVGDMCVVDAYCKTKKQRKKLNDRLRQSLRERNKNITNKDNRPHNPKNPPPRKNVQLVNQYVSKNVISSEHVIERETETSFSTSHYTSTTHHSTTVTQTPSHSWSNGLSESMISEKSYSVIVTSSVENSRHTSPTGPRGRLNGIGGPRDCSYLRHARDTPDSYRDSPHSERYVSAMTTPARMSPVEFKTPISPKSPCLETSPPESSLAVSVPSVAVSPFIEEERPLLLVSPPRLREKRYDRKTPQKTPHKQHNSYHHNPGHDSSSLPPNPLRIVEDEEYETTQEYEPSLEPAKKLVNSRRQKRTKPNGHISNRLELDSDSSSESSTSESETEDERIGEETPFLSIQNPLAASLESASLYRHADSRTNPTSRFSTQEELQARLSSIANQALCDQKKRKMTCKTLFI.

Residues 1–12 (MAEKKKVKEGKG) are compositionally biased toward basic and acidic residues. Disordered stretches follow at residues 1-43 (MAEK…KEIK) and 78-106 (GAKN…ISKA). The Extracellular segment spans residues 1–260 (MAEKKKVKEG…MEAEELYQKR (260 aa)). The span at 13–24 (RKGKGKKDRKGK) shows a compositional bias: basic residues. The region spanning 37–132 (PKLKEIKTQS…GNDTVTVNVT (96 aa)) is the Ig-like C2-type domain. C57 and C116 are oxidised to a cystine. Residues 78-91 (GAKNKPDSKPEHIK) show a composition bias toward basic and acidic residues. N-linked (GlcNAc...) asparagine glycosylation is found at N124 and N130. The 45-residue stretch at 188–232 (HLIKCSDKEKTYCVNGGECYVLNGITSSNQFMCKCKPGFTGARCT) folds into the EGF-like domain. Disulfide bonds link C192/C206, C200/C220, and C222/C231. The chain crosses the membrane as a helical span at residues 261–280 (VLTITGICIDLLVVGDMCVV). Over 281-677 (DAYCKTKKQR…RKMTCKTLFI (397 aa)) the chain is Cytoplasmic. Residues 294–315 (NDRLRQSLRERNKNITNKDNRP) show a composition bias toward basic and acidic residues. 5 disordered regions span residues 294-326 (NDRL…PRKN), 350-375 (ETSF…PSHS), 397-418 (SVEN…GIGG), 457-479 (VEFK…ESSL), and 503-617 (PPRL…FLSI). The span at 351-375 (TSFSTSHYTSTTHHSTTVTQTPSHS) shows a compositional bias: low complexity. The span at 397-407 (SVENSRHTSPT) shows a compositional bias: polar residues. Basic and acidic residues predominate over residues 505 to 515 (RLREKRYDRKT). Basic residues predominate over residues 568–578 (VNSRRQKRTKP). Residues 591-600 (DSSSESSTSE) are compositionally biased toward low complexity.

It belongs to the neuregulin family. Post-translationally, proteolytic cleavage close to the plasma membrane on the external face leads to the release of the soluble growth factor form. Extensive glycosylation precedes the proteolytic cleavage. Isoform alpha1 is expressed in brain and muscle. Isoform CRD is expressed in brain and spinal cord, but at very low level in muscle.

Its subcellular location is the cell membrane. It is found in the secreted. Functionally, direct ligand for the ERBB tyrosine kinase receptors. Induces expression of acetylcholine receptor in synaptic nuclei. The chain is Pro-neuregulin-1, membrane-bound isoform (nrg1) from Xenopus laevis (African clawed frog).